A 197-amino-acid polypeptide reads, in one-letter code: Imidazoleglycerol-phosphate dehydratase (197 aa).

Belongs to the imidazoleglycerol-phosphate dehydratase family.

Its subcellular location is the cytoplasm. The enzyme catalyses D-erythro-1-(imidazol-4-yl)glycerol 3-phosphate = 3-(imidazol-4-yl)-2-oxopropyl phosphate + H2O. It functions in the pathway amino-acid biosynthesis; L-histidine biosynthesis; L-histidine from 5-phospho-alpha-D-ribose 1-diphosphate: step 6/9. The polypeptide is Imidazoleglycerol-phosphate dehydratase (Pseudomonas putida (strain ATCC 700007 / DSM 6899 / JCM 31910 / BCRC 17059 / LMG 24140 / F1)).